The sequence spans 457 residues: Amidophosphoribosyltransferase (457 aa).

Cysteine 2 functions as the Nucleophile in the catalytic mechanism. One can recognise a Glutamine amidotransferase type-2 domain in the interval 2-223; it reads CGVVGIYHPD…PGKAAIIKDG (222 aa). Cysteine 239 is a [4Fe-4S] cluster binding site. Residues serine 286, aspartate 348, and aspartate 349 each contribute to the Mg(2+) site. Residues cysteine 385, cysteine 438, and cysteine 441 each coordinate [4Fe-4S] cluster.

The protein in the C-terminal section; belongs to the purine/pyrimidine phosphoribosyltransferase family. It depends on Mg(2+) as a cofactor. The cofactor is [4Fe-4S] cluster.

It catalyses the reaction 5-phospho-beta-D-ribosylamine + L-glutamate + diphosphate = 5-phospho-alpha-D-ribose 1-diphosphate + L-glutamine + H2O. It participates in purine metabolism; IMP biosynthesis via de novo pathway; N(1)-(5-phospho-D-ribosyl)glycinamide from 5-phospho-alpha-D-ribose 1-diphosphate: step 1/2. Catalyzes the formation of phosphoribosylamine from phosphoribosylpyrophosphate (PRPP) and glutamine. The chain is Amidophosphoribosyltransferase from Archaeoglobus fulgidus (strain ATCC 49558 / DSM 4304 / JCM 9628 / NBRC 100126 / VC-16).